The chain runs to 402 residues: Coiled-coil domain-containing protein 188 (402 aa).

3 disordered regions span residues 1-30 (MEGL…GGGL), 50-74 (HSVQ…EGEA), and 108-131 (HPGS…PCPC). Residues 154–189 (GLLGSAEQSFLQLEQENHSLKRQNQELREQLGALLG) adopt a coiled-coil conformation. A helical membrane pass occupies residues 347 to 363 (LLLGALLVWTAAYVYVV).

It localises to the membrane. This is Coiled-coil domain-containing protein 188 from Homo sapiens (Human).